The primary structure comprises 293 residues: NAD kinase (293 aa).

Asp-73 serves as the catalytic Proton acceptor. NAD(+)-binding positions include Asp-73 to Gly-74, Asn-147 to Glu-148, His-158, Arg-175, Asp-177, Thr-188 to Ser-193, and Gln-248.

This sequence belongs to the NAD kinase family. Requires a divalent metal cation as cofactor.

Its subcellular location is the cytoplasm. The catalysed reaction is NAD(+) + ATP = ADP + NADP(+) + H(+). Involved in the regulation of the intracellular balance of NAD and NADP, and is a key enzyme in the biosynthesis of NADP. Catalyzes specifically the phosphorylation on 2'-hydroxyl of the adenosine moiety of NAD to yield NADP. The protein is NAD kinase of Photobacterium profundum (strain SS9).